Reading from the N-terminus, the 172-residue chain is MRCPFCGAPDTRVIDSRLAGEGDQVRRRRECLSCSERFTTYENAELNMPRVVKRDGSREPFNEDKLKSGMTHALEKRAVSTDKVEEAVARIKRKLLGQGEREVDSRRIGEWVMEELRNLDQVAYIRFASVYLSFADVQAFREVIERLEKDLTPEMRKHQIPLLGDEEGEGKD.

Residues 3 to 34 (CPFCGAPDTRVIDSRLAGEGDQVRRRRECLSC) fold into a zinc finger. One can recognise an ATP-cone domain in the interval 49–139 (PRVVKRDGSR…VYLSFADVQA (91 aa)).

Belongs to the NrdR family. Requires Zn(2+) as cofactor.

Functionally, negatively regulates transcription of bacterial ribonucleotide reductase nrd genes and operons by binding to NrdR-boxes. The protein is Transcriptional repressor NrdR of Thioalkalivibrio sulfidiphilus (strain HL-EbGR7).